Consider the following 142-residue polypeptide: Glia maturation factor beta (142 aa).

The residue at position 2 (serine 2) is an N-acetylserine. In terms of domain architecture, ADF-H spans 4–139 (SLVVCDVAED…TEEWLREKLG (136 aa)).

This sequence belongs to the actin-binding proteins ADF family. GMF subfamily. Post-translationally, phosphorylated; stimulated by phorbol ester.

In terms of biological role, this protein causes differentiation of brain cells, stimulation of neural regeneration, and inhibition of proliferation of tumor cells. The protein is Glia maturation factor beta (Gmfb) of Mus musculus (Mouse).